The sequence spans 199 residues: dITP/XTP pyrophosphatase (199 aa).

Substrate is bound at residue Thr-7–Lys-12. 2 residues coordinate Mg(2+): Glu-37 and Asp-66. Residue Asp-66 is the Proton acceptor of the active site. Substrate-binding positions include Ser-67, Phe-146–Asp-149, Lys-169, and His-174–Arg-175.

The protein belongs to the HAM1 NTPase family. Homodimer. Mg(2+) serves as cofactor.

It carries out the reaction XTP + H2O = XMP + diphosphate + H(+). It catalyses the reaction dITP + H2O = dIMP + diphosphate + H(+). The enzyme catalyses ITP + H2O = IMP + diphosphate + H(+). Pyrophosphatase that catalyzes the hydrolysis of nucleoside triphosphates to their monophosphate derivatives, with a high preference for the non-canonical purine nucleotides XTP (xanthosine triphosphate), dITP (deoxyinosine triphosphate) and ITP. Seems to function as a house-cleaning enzyme that removes non-canonical purine nucleotides from the nucleotide pool, thus preventing their incorporation into DNA/RNA and avoiding chromosomal lesions. The protein is dITP/XTP pyrophosphatase of Deinococcus geothermalis (strain DSM 11300 / CIP 105573 / AG-3a).